Reading from the N-terminus, the 289-residue chain is LysM and putative peptidoglycan-binding domain-containing protein 4 (289 aa).

A disordered region spans residues 1 to 23 (MRLREGPTHSFQPPSSVHSSLGS). Residues 1 to 208 (MRLREGPTHS…PASGADWGIR (208 aa)) lie on the Extracellular side of the membrane. The span at 9 to 23 (HSFQPPSSVHSSLGS) shows a compositional bias: polar residues. Asparagine 30 and asparagine 59 each carry an N-linked (GlcNAc...) asparagine glycan. Residues 71-115 (LERAITEDDNLNKLALQYGCKVSDIKRVNNLITDQDIYALKTIKI) form the LysM domain. Asparagine 134 and asparagine 178 each carry an N-linked (GlcNAc...) asparagine glycan. A helical membrane pass occupies residues 209–229 (WWNAVFIMLLVGIVLPVFYIV). Residues 230–289 (YFKTQGDSEGTFSIEGRTNVSTSLSPHTNTGHSMEQMTQRTSGFSPGLLQDTHKLLNPGG) lie on the Cytoplasmic side of the membrane. The tract at residues 252–272 (SLSPHTNTGHSMEQMTQRTSG) is disordered.

Its subcellular location is the membrane. In Xenopus laevis (African clawed frog), this protein is LysM and putative peptidoglycan-binding domain-containing protein 4 (lysmd4).